The sequence spans 187 residues: Ribonuclease HII (187 aa).

The RNase H type-2 domain maps to 1–187; sequence MICGTDEAGR…NPVKRLLANL (187 aa). Residues aspartate 6, glutamate 7, and aspartate 98 each contribute to the a divalent metal cation site.

It belongs to the RNase HII family. Mn(2+) serves as cofactor. Mg(2+) is required as a cofactor.

The protein resides in the cytoplasm. It catalyses the reaction Endonucleolytic cleavage to 5'-phosphomonoester.. Functionally, endonuclease that specifically degrades the RNA of RNA-DNA hybrids. This Idiomarina loihiensis (strain ATCC BAA-735 / DSM 15497 / L2-TR) protein is Ribonuclease HII.